A 280-amino-acid polypeptide reads, in one-letter code: 4-diphosphocytidyl-2-C-methyl-D-erythritol kinase (280 aa).

Lysine 8 is a catalytic residue. Residue proline 91–threonine 101 participates in ATP binding. The active site involves aspartate 133.

It belongs to the GHMP kinase family. IspE subfamily.

The enzyme catalyses 4-CDP-2-C-methyl-D-erythritol + ATP = 4-CDP-2-C-methyl-D-erythritol 2-phosphate + ADP + H(+). It functions in the pathway isoprenoid biosynthesis; isopentenyl diphosphate biosynthesis via DXP pathway; isopentenyl diphosphate from 1-deoxy-D-xylulose 5-phosphate: step 3/6. Its function is as follows. Catalyzes the phosphorylation of the position 2 hydroxy group of 4-diphosphocytidyl-2C-methyl-D-erythritol. This is 4-diphosphocytidyl-2-C-methyl-D-erythritol kinase from Clostridium beijerinckii (strain ATCC 51743 / NCIMB 8052) (Clostridium acetobutylicum).